The primary structure comprises 297 residues: Formamidopyrimidine-DNA glycosylase (297 aa).

Catalysis depends on proline 2, which acts as the Schiff-base intermediate with DNA. The Proton donor role is filled by glutamate 3. Lysine 58 acts as the Proton donor; for beta-elimination activity in catalysis. Residues histidine 104, arginine 127, and lysine 170 each coordinate DNA. An FPG-type zinc finger spans residues 261 to 297 (NVYDREGEACRTPGCTGTVERMTQAGRSTFHCPQCQR). The active-site Proton donor; for delta-elimination activity is the arginine 287.

It belongs to the FPG family. As to quaternary structure, monomer. The cofactor is Zn(2+).

It catalyses the reaction Hydrolysis of DNA containing ring-opened 7-methylguanine residues, releasing 2,6-diamino-4-hydroxy-5-(N-methyl)formamidopyrimidine.. The enzyme catalyses 2'-deoxyribonucleotide-(2'-deoxyribose 5'-phosphate)-2'-deoxyribonucleotide-DNA = a 3'-end 2'-deoxyribonucleotide-(2,3-dehydro-2,3-deoxyribose 5'-phosphate)-DNA + a 5'-end 5'-phospho-2'-deoxyribonucleoside-DNA + H(+). Its function is as follows. Involved in base excision repair of DNA damaged by oxidation or by mutagenic agents. Acts as a DNA glycosylase that recognizes and removes damaged bases. Has a preference for oxidized purines, such as 7,8-dihydro-8-oxoguanine (8-oxoG). Has AP (apurinic/apyrimidinic) lyase activity and introduces nicks in the DNA strand. Cleaves the DNA backbone by beta-delta elimination to generate a single-strand break at the site of the removed base with both 3'- and 5'-phosphates. This chain is Formamidopyrimidine-DNA glycosylase, found in Allorhizobium ampelinum (strain ATCC BAA-846 / DSM 112012 / S4) (Agrobacterium vitis (strain S4)).